A 250-amino-acid polypeptide reads, in one-letter code: MTETILAAQIEVGEHHTATWLGMTVNTDTVLSTAIAGLIVIALAFYLRAKVTSTDVPGGVQLFFEAITIQMRNQVESAIGMRIAPFVLPLAVTIFVFILISNWLAVLPVQYTDKHGHTTELLKSAAADINYVLALALFVFVCYHTAGIWRRGIVGHPIKLLKGHVTLLAPINLVEEVAKPISLSLRLFGNIFAGGILVALIALFPPYIMWAPNAIWKAFDLFVGAIQAFIFALLTILYFSQAMELEEEHH.

Transmembrane regions (helical) follow at residues 27–47, 86–106, 129–149, 191–211, and 219–239; these read TDTVLSTAIAGLIVIALAFYL, FVLPLAVTIFVFILISNWLAV, INYVLALALFVFVCYHTAGIW, IFAGGILVALIALFPPYIMWA, and FDLFVGAIQAFIFALLTILYF.

The protein belongs to the ATPase A chain family. In terms of assembly, F-type ATPases have 2 components, CF(1) - the catalytic core - and CF(0) - the membrane proton channel. CF(1) has five subunits: alpha(3), beta(3), gamma(1), delta(1), epsilon(1). CF(0) has three main subunits: a(1), b(2) and c(9-12). The alpha and beta chains form an alternating ring which encloses part of the gamma chain. CF(1) is attached to CF(0) by a central stalk formed by the gamma and epsilon chains, while a peripheral stalk is formed by the delta and b chains.

It localises to the cell membrane. Functionally, key component of the proton channel; it plays a direct role in the translocation of protons across the membrane. The polypeptide is ATP synthase subunit a (Mycobacterium bovis (strain ATCC BAA-935 / AF2122/97)).